The chain runs to 1776 residues: Signal-induced proliferation-associated 1-like protein 3 (1776 aa).

Disordered stretches follow at residues 41-157 and 240-325; these read AQNG…GRAF and PGAL…EASR. The segment covering 54 to 69 has biased composition (low complexity); that stretch reads PAATTTRPSPTTPAMP. Polar residues-rich tracts occupy residues 89–99 and 112–129; these read EQSNPSPSQDT and RNLQNGQLPSSTPASSGS. Phosphoserine is present on S94. A compositionally biased stretch (basic residues) spans 131–140; that stretch reads AFHRLSRRRS. S140 carries the phosphoserine modification. Residues 257–268 show a composition bias toward polar residues; that stretch reads GQPTKDSLQSLQ. A Phosphoserine modification is found at S394. The segment at 438 to 461 is disordered; it reads SRASVGSPGGSSEAHMAEPTLSTH. One can recognise a Rap-GAP domain in the interval 605 to 822; it reads LLKLDEQGLC…RTRQEYLKDL (218 aa). A PDZ domain is found at 960–1024; sequence DMTLRRNGLG…DQMIDLLRTS (65 aa). Disordered regions lie at residues 1040–1104, 1117–1164, and 1184–1632; these read PRRG…AQSL, RESQ…ATYA, and DPHF…LDPG. Polar residues-rich tracts occupy residues 1074–1104 and 1151–1160; these read APWQWSGPASHNSLPATKWTTPATPGHAQSL and PSGSFSTPGS. The segment covering 1190–1201 has biased composition (low complexity); that stretch reads DGMSSGDSSSGG. A compositionally biased stretch (basic and acidic residues) spans 1239 to 1255; that stretch reads SRQDAAGKDSPNRHSKG. Positions 1260–1275 are enriched in low complexity; sequence SSHSSSNTLSSNASSS. Polar residues predominate over residues 1298–1316; the sequence is GGSSDSGIDTTLYTSSPSC. A compositionally biased stretch (basic and acidic residues) spans 1344–1357; that stretch reads SAGRPHPVDRRREV. S1358 carries the post-translational modification Phosphoserine. A Phosphothreonine modification is found at T1381. Over residues 1409 to 1436 the composition is skewed to polar residues; sequence VYKTASAETPRPSQLSQCSPFQLSTSVP. K1442 is modified (N6-acetyllysine). A compositionally biased stretch (basic and acidic residues) spans 1503-1512; the sequence is TIEDDLKKLI. Composition is skewed to polar residues over residues 1526 to 1541 and 1566 to 1578; these read GQSPQKSLQRTLSDES and LFTSTCTFPSSTL. Phosphoserine occurs at positions 1538 and 1541. Positions 1589–1601 are enriched in low complexity; that stretch reads PPSGAPSTTPATG. 2 positions are modified to phosphoserine: S1614 and S1617. Residues 1620 to 1630 show a composition bias toward basic and acidic residues; sequence DGRDRPLRRLD. A Phosphoserine modification is found at S1672. Residues 1678–1705 are disordered; that stretch reads AHSPVHSHLSLERGPQTPRATPTMSEES. Residues T1694 and T1698 each carry the phosphothreonine modification. The stretch at 1715–1769 forms a coiled coil; it reads QLEVMLKQLHTDLQKEKQDKVVLQSEVASLRQNNQRLQEESQAASEQLRKFAELF.

It is found in the apical cell membrane. Its function is as follows. Plays a critical role in epithelial cell morphogenesis, polarity, adhesion and cytoskeletal organization in the lens. This is Signal-induced proliferation-associated 1-like protein 3 (Sipa1l3) from Mus musculus (Mouse).